We begin with the raw amino-acid sequence, 376 residues long: Putative glutamate--cysteine ligase 2-1 (376 aa).

It belongs to the glutamate--cysteine ligase type 2 family. YbdK subfamily.

The enzyme catalyses L-cysteine + L-glutamate + ATP = gamma-L-glutamyl-L-cysteine + ADP + phosphate + H(+). Functionally, ATP-dependent carboxylate-amine ligase which exhibits weak glutamate--cysteine ligase activity. This Mycobacterium sp. (strain JLS) protein is Putative glutamate--cysteine ligase 2-1.